Here is a 153-residue protein sequence, read N- to C-terminus: Endoribonuclease YbeY (153 aa).

3 residues coordinate Zn(2+): histidine 114, histidine 118, and histidine 124.

It belongs to the endoribonuclease YbeY family. Zn(2+) is required as a cofactor.

It localises to the cytoplasm. Single strand-specific metallo-endoribonuclease involved in late-stage 70S ribosome quality control and in maturation of the 3' terminus of the 16S rRNA. The sequence is that of Endoribonuclease YbeY from Shewanella baltica (strain OS223).